A 139-amino-acid chain; its full sequence is Protein AC53 (139 aa).

Its subcellular location is the host cytoplasm. The protein resides in the host nucleus. In terms of biological role, plays a role in nucleocapsid assembly. This Lepidoptera (butterflies and moths) protein is Protein AC53 (AC53).